The sequence spans 613 residues: 9-cis-epoxycarotenoid dioxygenase NCED5, chloroplastic (613 aa).

Residues 1–15 (MPTTFTPNSPASSCS) show a composition bias toward polar residues. The N-terminal 36 residues, 1 to 36 (MPTTFTPNSPASSCSIHHRASPSRGARNSVRFTRPR), are a transit peptide targeting the chloroplast. The segment at 1–62 (MPTTFTPNSP…PPAYVPPPPP (62 aa)) is disordered. A compositionally biased stretch (low complexity) spans 37-50 (AAAAATNSVLSAPS). Pro residues predominate over residues 51–62 (SVPPAYVPPPPP). Residues histidine 305, histidine 354, histidine 419, and histidine 600 each coordinate Fe cation.

It belongs to the carotenoid oxygenase family. Fe(2+) is required as a cofactor.

It localises to the plastid. The protein resides in the chloroplast. It carries out the reaction a 9-cis-epoxycarotenoid + O2 = a 12'-apo-carotenal + 2-cis,4-trans-xanthoxin. It catalyses the reaction 9-cis-violaxanthin + O2 = (3S,5R,6S)-5,6-epoxy-3-hydroxy-5,6-dihydro-12'-apo-beta-caroten-12'-al + 2-cis,4-trans-xanthoxin. The enzyme catalyses 9'-cis-neoxanthin + O2 = (3S,5R,6R)-3,5-dihydroxy-6,7-didehydro-5,6-dihydro-12'-apo-beta-caroten-12'-al + 2-cis,4-trans-xanthoxin. Functionally, has a 11,12(11',12') 9-cis epoxycarotenoid cleavage activity. Catalyzes the first step of abscisic-acid biosynthesis from carotenoids. The polypeptide is 9-cis-epoxycarotenoid dioxygenase NCED5, chloroplastic (Oryza sativa subsp. japonica (Rice)).